The following is a 1138-amino-acid chain: Mastermind-like protein 3 (1138 aa).

Over residues Pro-37–His-48 the composition is skewed to polar residues. 6 disordered regions span residues Pro-37–Pro-68, Glu-119–Glu-148, Arg-169–Thr-188, Pro-207–Pro-237, Glu-334–Lys-480, and Gln-503–Phe-547. Residues Gly-52–Ser-64 are compositionally biased toward gly residues. Polar residues-rich tracts occupy residues Gly-130–Gln-139 and Asn-173–Thr-188. Composition is skewed to polar residues over residues Gln-343–Ser-359 and Gly-372–Leu-394. A compositionally biased stretch (low complexity) spans Pro-395–Ala-411. Polar residues predominate over residues Ala-414 to Thr-426. The span at Gln-467–Lys-480 shows a compositional bias: low complexity. Lys-603 is subject to N6-acetyllysine. Disordered regions lie at residues Arg-615–His-662, His-691–Gly-721, Leu-968–Gln-991, Ala-1024–Tyr-1084, and Gln-1090–Pro-1109. Residues Gln-633 to Gln-649 show a composition bias toward low complexity. Residues Pro-1064–Tyr-1084 are compositionally biased toward polar residues.

It belongs to the mastermind family. Interacts through its N-terminal region with the ankyrin repeat region of the Notch proteins NOTCH1, NOTCH2, NOTCH3 and NOTCH4. Forms a DNA-binding complex with Notch proteins and RBPSUH/RBP-J kappa.

It is found in the nucleus speckle. Acts as a transcriptional coactivator for NOTCH proteins. Has been shown to amplify NOTCH-induced transcription of HES1. The sequence is that of Mastermind-like protein 3 from Homo sapiens (Human).